Here is a 428-residue protein sequence, read N- to C-terminus: Putative gustatory receptor 2a (428 aa).

Residues 1–40 (MDTLRALEPLHRACQVCNLWPWRLAPPPDSEGILLRRSRW) lie on the Cytoplasmic side of the membrane. Residues 41-61 (LELYGWTVLIAATSFTVYGLF) form a helical membrane-spanning segment. Residues 62–145 (QESSVEEKQD…INMRRQTSRR (84 aa)) lie on the Extracellular side of the membrane. Residues 146–166 (AVWILWGYAVSQLLILGAKLL) form a helical membrane-spanning segment. The Cytoplasmic segment spans residues 167–173 (SRGDRFP). A helical membrane pass occupies residues 174-194 (IYWISYLLPLLVCGLRYFQIF). N-linked (GlcNAc...) asparagine glycosylation occurs at asparagine 195. Over 195-250 (NATQLVRQRLDVLLVALQQLQLHQKGPAVDTVLEEQEDLEEAAMDRLIAVRLVYQR) the chain is Extracellular. The chain crosses the membrane as a helical span at residues 251–271 (VWALVALLNRCYGLSMLMQVG). Residues 272–300 (NDFLAITSNCYWMFLNFRQSAASPFDILQ) are Cytoplasmic-facing. A helical transmembrane segment spans residues 301–321 (IVASGVWSAPHLGNVLVLSLL). The Extracellular segment spans residues 322-349 (CDRTAQCASRLALCLHQVSVDLRNESHN). The N-linked (GlcNAc...) asparagine glycan is linked to asparagine 345. A helical membrane pass occupies residues 350-370 (ALVGTLVRYCAPLIILVPLQI). Residues 371–395 (TQFSLQLLHQRLHFSAAGFFNVDCT) are Cytoplasmic-facing. Residues 396–416 (LLYTIVGATTTYLIILIQFHM) traverse the membrane as a helical segment. The Extracellular portion of the chain corresponds to 417–428 (SESTIGSDSNGQ).

The protein belongs to the insect chemoreceptor superfamily. Gustatory receptor (GR) family. Gr2a subfamily. As to expression, expressed in neurons of the terminal external chemosensory organ, the dorsal external chemosensory organ, as well as in the dorsal pharyngeal sense organ of larvae.

It localises to the cell membrane. Probable gustatory receptor which mediates acceptance or avoidance behavior, depending on its not yet determined substrates. The protein is Putative gustatory receptor 2a (Gr2a) of Drosophila melanogaster (Fruit fly).